The chain runs to 65 residues: Large ribosomal subunit protein bL28 (65 aa).

The disordered stretch occupies residues 1–21 (MPGRDQLTGQKALSGNKRSHA).

Belongs to the bacterial ribosomal protein bL28 family.

The polypeptide is Large ribosomal subunit protein bL28 (Metamycoplasma arthritidis (strain 158L3-1) (Mycoplasma arthritidis)).